Here is a 334-residue protein sequence, read N- to C-terminus: Glycerol-3-phosphate dehydrogenase [NAD(P)+] (334 aa).

Residues Ser13, Phe14, and Lys108 each contribute to the NADPH site. Positions 108, 137, and 139 each coordinate sn-glycerol 3-phosphate. Ala141 provides a ligand contact to NADPH. 5 residues coordinate sn-glycerol 3-phosphate: Lys193, Asp246, Ser256, Arg257, and Asn258. Lys193 acts as the Proton acceptor in catalysis. NADPH is bound at residue Arg257. NADPH-binding residues include Val281 and Glu283.

The protein belongs to the NAD-dependent glycerol-3-phosphate dehydrogenase family.

It localises to the cytoplasm. It carries out the reaction sn-glycerol 3-phosphate + NAD(+) = dihydroxyacetone phosphate + NADH + H(+). The catalysed reaction is sn-glycerol 3-phosphate + NADP(+) = dihydroxyacetone phosphate + NADPH + H(+). Its pathway is membrane lipid metabolism; glycerophospholipid metabolism. In terms of biological role, catalyzes the reduction of the glycolytic intermediate dihydroxyacetone phosphate (DHAP) to sn-glycerol 3-phosphate (G3P), the key precursor for phospholipid synthesis. This chain is Glycerol-3-phosphate dehydrogenase [NAD(P)+], found in Bartonella tribocorum (strain CIP 105476 / IBS 506).